Consider the following 392-residue polypeptide: WD repeat-containing protein GTS1 (392 aa).

4 WD repeats span residues 81 to 124 (GHSD…QVSR), 128 to 167 (GNDQEIFSFSYGGAADNLLAGGCKEQVLLWDWRNSKQVAC), 171 to 211 (SHMD…NDDD), and 323 to 368 (GHID…TEIN).

In terms of tissue distribution, expressed in germinating seeds, rosettes leaves, flowers and siliques.

Involved in the control of plant growth development. Acts as negative regulator of seed germination, cell division in meristematic regions, plant growth and overall biomass accumulation. May function by regulating ribosome activities and biogenesis in plant cells. The protein is WD repeat-containing protein GTS1 of Arabidopsis thaliana (Mouse-ear cress).